The chain runs to 481 residues: GDP-fucose protein O-fucosyltransferase 2 (481 aa).

The first 22 residues, 1–22 (MKGRAHIWVALLLACLPPRFRN), serve as a signal peptide directing secretion. GDP-beta-L-fucose is bound by residues 59–63 (GEGFN), 287–289 (HLR), D365, and 382–383 (RF). E60 functions as the Proton acceptor in the catalytic mechanism.

Belongs to the glycosyltransferase 68 family.

It is found in the endoplasmic reticulum. The catalysed reaction is L-seryl-[protein] + GDP-beta-L-fucose = 3-O-(alpha-L-fucosyl)-L-seryl-[protein] + GDP + H(+). The enzyme catalyses L-threonyl-[protein] + GDP-beta-L-fucose = 3-O-(alpha-L-fucosyl)-L-threonyl-[protein] + GDP + H(+). Its pathway is protein modification; protein glycosylation. Functionally, catalyzes the reaction that attaches fucose through an O-glycosidic linkage to a conserved serine or threonine residue in the consensus sequence C1-X-X-S/T-C2 of thrombospondin type I repeats (TSRs) where C1 and C2 are the first and second cysteines of the repeat, respectively. O-fucosylates sporozoite proteins CSP and TRAP. O-fucosylation regulates stability and intracellular trafficking of TRAP but not of CSP. Probably by regulating protein O-fucosylation, may play a role in parasite transmission to the mosquito vector and/or infection of the vertebrate host hepatocytes; however, POFUT2 involvement in transmission/infection is controversial. This Plasmodium vivax (strain Salvador I) protein is GDP-fucose protein O-fucosyltransferase 2.